Here is a 215-residue protein sequence, read N- to C-terminus: Vesicle-trafficking protein SEC22b-B (215 aa).

The Cytoplasmic portion of the chain corresponds to 1–190 (MVLLTMIARL…RSDAKYLNTR (190 aa)). A Longin domain is found at 6 to 119 (MIARLADGLP…YSFIEFDTYI (114 aa)). The v-SNARE coiled-coil homology domain maps to 134 to 194 (NLSNINTELQ…KYLNTRSTYA (61 aa)). A helical membrane pass occupies residues 191–213 (STYAKLAAGGVFFIMLIVYIRFW). At 214-215 (WL) the chain is on the lumenal side.

The protein belongs to the synaptobrevin family. As to quaternary structure, component of 2 distinct SNARE complexes.

It localises to the endoplasmic reticulum membrane. Its subcellular location is the endoplasmic reticulum-Golgi intermediate compartment membrane. The protein resides in the golgi apparatus. It is found in the cis-Golgi network membrane. The protein localises to the trans-Golgi network membrane. It localises to the melanosome. SNARE involved in targeting and fusion of ER-derived transport vesicles with the Golgi complex as well as Golgi-derived retrograde transport vesicles with the ER. The polypeptide is Vesicle-trafficking protein SEC22b-B (Danio rerio (Zebrafish)).